Here is a 622-residue protein sequence, read N- to C-terminus: Palmitoyltransferase ZDHHC13 (622 aa).

Met1 is modified (N-acetylmethionine). Topologically, residues 1–291 (MEGPGLGSQC…RLWRWLHKCE (291 aa)) are cytoplasmic. ANK repeat units follow at residues 43 to 78 (PLIE…VRQP), 81 to 110 (ENVS…VIDQ), 115 to 144 (LNST…DPTL), 148 to 177 (EGFS…SVNM), 181 to 211 (NGQT…SLSV), 216 to 245 (HQNT…SLDI), and 249 to 277 (KGET…KMRA). A helical transmembrane segment spans residues 292-312 (LFLLLILSMITLWAVGYILDF). Over 313–320 (NSDSWLLK) the chain is Lumenal. A helical membrane pass occupies residues 321 to 341 (GCLLVALFFLTSLFPRFLVGY). The Cytoplasmic portion of the chain corresponds to 342-347 (KNLVYL). A helical membrane pass occupies residues 348 to 368 (PTVFLLSSIFWIFMTWFILFF). Over 369-371 (PDT) the chain is Lumenal. The chain crosses the membrane as a helical span at residues 372–392 (AGSPLYFAFIFSIMAFLYFFY). Residues 393 to 470 (KTWATDPGFT…RCIGFGNHHH (78 aa)) are Cytoplasmic-facing. The DHHC domain maps to 426–476 (TFCTSCLIRKPLRSLHCHVCNSCVARFDQHCFWTGRCIGFGNHHHYIFFLL). The active-site S-palmitoyl cysteine intermediate is the Cys456. Residues 471 to 491 (YIFFLLSLSMVCDWIIYGSFV) form a helical membrane-spanning segment. Residues 492–518 (YWSNHCATTFKEDGLWTYLNQIVACSP) are Lumenal-facing. Residues 519 to 539 (WVLYIFMLAAFHFSWSTFLLI) traverse the membrane as a helical segment. The Cytoplasmic segment spans residues 540–622 (NQLFQIAFLG…PAKEKVLRSV (83 aa)).

It belongs to the DHHC palmitoyltransferase family. AKR/ZDHHC17 subfamily. As to quaternary structure, interacts (via ANK repeats) with CLIP3. Interacts (via ANK repeats) with DNAJC5 (via C-terminus). Interacts (via ANK repeats) with HTT. Interacts (via ANK repeats) with MAP6. Interacts (via ANK repeats) with SNAP23. Interacts (via ANK repeats) with SNAP25. May interact (via ANK repeats) with SPRED2. In terms of tissue distribution, expressed in most adult tissues, but at low levels in the liver, skin, and lung.

The protein localises to the golgi apparatus membrane. The protein resides in the cytoplasmic vesicle membrane. It catalyses the reaction L-cysteinyl-[protein] + hexadecanoyl-CoA = S-hexadecanoyl-L-cysteinyl-[protein] + CoA. In terms of biological role, palmitoyltransferase that could catalyze the addition of palmitate onto various protein substrates. Palmitoyltransferase for HTT and GAD2. May play a role in Mg(2+) transport. In Mus musculus (Mouse), this protein is Palmitoyltransferase ZDHHC13.